Here is a 166-residue protein sequence, read N- to C-terminus: MMTQPQPLAFRIGLGYDSHRLGPDGPLRIGGLDVAGDFHAIGHSDADVLLHAVTDALMGAIAGPDIGRLFPDDADENRGRDSRDFVEEALRRVNEAGYEINNVDAVILAQKPKMAPHIDSMRAAVAEMLQTTIEQVGLKAKTGEGVDAVGRSEAIAARAVVMLSRR.

Asp17 and His19 together coordinate a divalent metal cation. Residues 17-19 and 43-44 contribute to the 4-CDP-2-C-methyl-D-erythritol 2-phosphate site; these read DSH and HS. His51 serves as a coordination point for a divalent metal cation. Residues 65–67, 109–115, and Arg151 contribute to the 4-CDP-2-C-methyl-D-erythritol 2-phosphate site; these read DIG and AQKPKMA.

Belongs to the IspF family. In terms of assembly, homotrimer. Requires a divalent metal cation as cofactor.

It catalyses the reaction 4-CDP-2-C-methyl-D-erythritol 2-phosphate = 2-C-methyl-D-erythritol 2,4-cyclic diphosphate + CMP. It functions in the pathway isoprenoid biosynthesis; isopentenyl diphosphate biosynthesis via DXP pathway; isopentenyl diphosphate from 1-deoxy-D-xylulose 5-phosphate: step 4/6. Its function is as follows. Involved in the biosynthesis of isopentenyl diphosphate (IPP) and dimethylallyl diphosphate (DMAPP), two major building blocks of isoprenoid compounds. Catalyzes the conversion of 4-diphosphocytidyl-2-C-methyl-D-erythritol 2-phosphate (CDP-ME2P) to 2-C-methyl-D-erythritol 2,4-cyclodiphosphate (ME-CPP) with a corresponding release of cytidine 5-monophosphate (CMP). In Rhodopirellula baltica (strain DSM 10527 / NCIMB 13988 / SH1), this protein is 2-C-methyl-D-erythritol 2,4-cyclodiphosphate synthase.